The following is a 103-amino-acid chain: Small ribosomal subunit protein uS10 (103 aa).

The protein belongs to the universal ribosomal protein uS10 family. In terms of assembly, part of the 30S ribosomal subunit.

Its function is as follows. Involved in the binding of tRNA to the ribosomes. The protein is Small ribosomal subunit protein uS10 of Polynucleobacter necessarius subsp. necessarius (strain STIR1).